The primary structure comprises 142 residues: Translation initiation factor 2 subunit beta (142 aa).

It belongs to the eIF-2-beta/eIF-5 family. In terms of assembly, heterotrimer composed of an alpha, a beta and a gamma chain.

EIF-2 functions in the early steps of protein synthesis by forming a ternary complex with GTP and initiator tRNA. This Methanosphaera stadtmanae (strain ATCC 43021 / DSM 3091 / JCM 11832 / MCB-3) protein is Translation initiation factor 2 subunit beta.